Here is a 248-residue protein sequence, read N- to C-terminus: 2,3-bisphosphoglycerate-dependent phosphoglycerate mutase (248 aa).

Substrate contacts are provided by residues 8-15 (RHGESTWN), 21-22 (TG), Arg-60, 87-90 (ERHY), Lys-98, 114-115 (RR), and 183-184 (GN). His-9 (tele-phosphohistidine intermediate) is an active-site residue. Glu-87 (proton donor/acceptor) is an active-site residue.

The protein belongs to the phosphoglycerate mutase family. BPG-dependent PGAM subfamily. As to quaternary structure, homodimer.

The enzyme catalyses (2R)-2-phosphoglycerate = (2R)-3-phosphoglycerate. The protein operates within carbohydrate degradation; glycolysis; pyruvate from D-glyceraldehyde 3-phosphate: step 3/5. In terms of biological role, catalyzes the interconversion of 2-phosphoglycerate and 3-phosphoglycerate. The polypeptide is 2,3-bisphosphoglycerate-dependent phosphoglycerate mutase (Burkholderia orbicola (strain MC0-3)).